The primary structure comprises 60 residues: UPF0434 protein YcaR (60 aa).

It belongs to the UPF0434 family.

This Salmonella agona (strain SL483) protein is UPF0434 protein YcaR.